A 93-amino-acid chain; its full sequence is Large ribosomal subunit protein uL23cz/uL23cy (93 aa).

This sequence belongs to the universal ribosomal protein uL23 family. As to quaternary structure, part of the 50S ribosomal subunit.

It is found in the plastid. The protein localises to the chloroplast. In terms of biological role, binds to 23S rRNA. This Gossypium barbadense (Sea Island cotton) protein is Large ribosomal subunit protein uL23cz/uL23cy (rpl23-A).